We begin with the raw amino-acid sequence, 225 residues long: Uracil-DNA glycosylase 1 (225 aa).

D68 serves as the catalytic Proton acceptor.

It belongs to the uracil-DNA glycosylase (UDG) superfamily. UNG family.

It is found in the cytoplasm. It catalyses the reaction Hydrolyzes single-stranded DNA or mismatched double-stranded DNA and polynucleotides, releasing free uracil.. Excises uracil residues from the DNA which can arise as a result of misincorporation of dUMP residues by DNA polymerase or due to deamination of cytosine. This Streptomyces coelicolor (strain ATCC BAA-471 / A3(2) / M145) protein is Uracil-DNA glycosylase 1 (ung1).